The sequence spans 208 residues: Small ribosomal subunit protein uS3 (208 aa).

In terms of domain architecture, KH type-2 spans 16 to 85 (VDEYLKNKLP…KPQIEVKQIE (70 aa)).

The protein belongs to the universal ribosomal protein uS3 family. Part of the 30S ribosomal subunit.

Its function is as follows. Binds the lower part of the 30S subunit head. In Methanococcus aeolicus (strain ATCC BAA-1280 / DSM 17508 / OCM 812 / Nankai-3), this protein is Small ribosomal subunit protein uS3.